The primary structure comprises 413 residues: Phosphopentomutase (413 aa).

The Mn(2+) site is built by D11, D306, H311, D347, H348, and H359.

The protein belongs to the phosphopentomutase family. Requires Mn(2+) as cofactor.

The protein localises to the cytoplasm. It carries out the reaction 2-deoxy-alpha-D-ribose 1-phosphate = 2-deoxy-D-ribose 5-phosphate. It catalyses the reaction alpha-D-ribose 1-phosphate = D-ribose 5-phosphate. Its pathway is carbohydrate degradation; 2-deoxy-D-ribose 1-phosphate degradation; D-glyceraldehyde 3-phosphate and acetaldehyde from 2-deoxy-alpha-D-ribose 1-phosphate: step 1/2. Functionally, isomerase that catalyzes the conversion of deoxy-ribose 1-phosphate (dRib-1-P) and ribose 1-phosphate (Rib-1-P) to deoxy-ribose 5-phosphate (dRib-5-P) and ribose 5-phosphate (Rib-5-P), respectively. The polypeptide is Phosphopentomutase (Helicobacter pylori (strain P12)).